A 235-amino-acid chain; its full sequence is Small ribosomal subunit protein uS3 (235 aa).

Positions 39 to 107 constitute a KH type-2 domain; it reads VRQFLNKELA…PAQINIAEVK (69 aa). A compositionally biased stretch (low complexity) spans 215–226; that stretch reads AQQPEQQPATPK. The tract at residues 215 to 235 is disordered; it reads AQQPEQQPATPKKAPRGKGRK.

Belongs to the universal ribosomal protein uS3 family. Part of the 30S ribosomal subunit. Forms a tight complex with proteins S10 and S14.

Its function is as follows. Binds the lower part of the 30S subunit head. Binds mRNA in the 70S ribosome, positioning it for translation. In Histophilus somni (strain 129Pt) (Haemophilus somnus), this protein is Small ribosomal subunit protein uS3.